A 209-amino-acid chain; its full sequence is Small ribosomal subunit protein eS1 (209 aa).

Belongs to the eukaryotic ribosomal protein eS1 family.

The protein is Small ribosomal subunit protein eS1 of Picrophilus torridus (strain ATCC 700027 / DSM 9790 / JCM 10055 / NBRC 100828 / KAW 2/3).